A 302-amino-acid chain; its full sequence is N-acetyl-D-glucosamine kinase (302 aa).

Residues 4-11 (GFDVGGTK) and 133-140 (GFGGGLVF) contribute to the ATP site. Positions 157, 177, 179, and 184 each coordinate Zn(2+).

This sequence belongs to the ROK (NagC/XylR) family. NagK subfamily.

It carries out the reaction N-acetyl-D-glucosamine + ATP = N-acetyl-D-glucosamine 6-phosphate + ADP + H(+). The protein operates within cell wall biogenesis; peptidoglycan recycling. Its function is as follows. Catalyzes the phosphorylation of N-acetyl-D-glucosamine (GlcNAc) derived from cell-wall degradation, yielding GlcNAc-6-P. The polypeptide is N-acetyl-D-glucosamine kinase (Aliivibrio salmonicida (strain LFI1238) (Vibrio salmonicida (strain LFI1238))).